Here is a 498-residue protein sequence, read N- to C-terminus: MAKYAAAIDQGTTSTRCMIFDHSGNVICYDQKEHEQIYPRPGWVEHSPDEIWERTQSVIRGALSKGGLSASDIVAVGITNQRETTVVWNRKTGRPVYNAIVWQDTRTDQICNELAADGGQDRFRPKVGLPLATYFSGPKIRWILDNVPGAREAAEAGDVVFGNIDTFLTWWLTGGPNGGVHVTDVTNASRTMLMNLETLDWDDEILGIMGIPRQMLPKIVPSSMVYGTATGELAGVPVAGILGDQQAAMVGQTCFDVGEAKNTYGTGSFMLLNTGTKLVPSKSGLLTTVCYKFGDQPAVYALEGSIAITGALVQWLRDNLGLITSSAEVEALANLVEDNGGIYFVPAFSGLFAPYWRSDARGVIVGLTRYVNKDHLARAVLEATAYQTREVLDAMEQDSGVKLTALKVDGGMVYNNTLMQFQADILGVPVIRPKVAETTSLGAAYAAGLAVGFWSNTDEMRANWGVDHTWTPQMDEATRERLYRGWKKAVTRTFDWVE.

Threonine 12 lines the ADP pocket. ATP-binding residues include threonine 12, threonine 13, and serine 14. Threonine 12 contributes to the sn-glycerol 3-phosphate binding site. ADP is bound at residue arginine 16. Sn-glycerol 3-phosphate-binding residues include arginine 82, glutamate 83, tyrosine 134, and aspartate 244. Arginine 82, glutamate 83, tyrosine 134, aspartate 244, and glutamine 245 together coordinate glycerol. The ADP site is built by threonine 266 and glycine 310. Threonine 266, glycine 310, glutamine 314, and glycine 411 together coordinate ATP. ADP-binding residues include glycine 411 and asparagine 415.

The protein belongs to the FGGY kinase family.

The catalysed reaction is glycerol + ATP = sn-glycerol 3-phosphate + ADP + H(+). The protein operates within polyol metabolism; glycerol degradation via glycerol kinase pathway; sn-glycerol 3-phosphate from glycerol: step 1/1. Its activity is regulated as follows. Inhibited by fructose 1,6-bisphosphate (FBP). In terms of biological role, key enzyme in the regulation of glycerol uptake and metabolism. Catalyzes the phosphorylation of glycerol to yield sn-glycerol 3-phosphate. In Chloroflexus aurantiacus (strain ATCC 29366 / DSM 635 / J-10-fl), this protein is Glycerol kinase.